Reading from the N-terminus, the 510-residue chain is uncharacterized protein (510 aa).

It to B.subtilis SpoVR.

This is an uncharacterized protein from Escherichia coli (strain K12).